The primary structure comprises 286 residues: Myb family transcription factor PHL7 (286 aa).

The 61-residue stretch at 12-72 folds into the HTH myb-type domain; it reads HASKQRLRWT…HLQKYRLAKY (61 aa). The H-T-H motif DNA-binding region spans 43 to 68; it reads PKGVLRVMGVQGLTIYHVKSHLQKYR. A disordered region spans residues 74-97; the sequence is PDSSSEGKKTDKKESGDMLSGLDG. Over residues 78-89 the composition is skewed to basic and acidic residues; the sequence is SEGKKTDKKESG. A coiled-coil region spans residues 104 to 124; that stretch reads TEALKLQMEVQKRLHEQLEVQ. The LHEQLE signature appears at 117–122; sequence LHEQLE. Residues 152 to 227 form a disordered region; sequence LGEPSAPVTG…TGEERLSKKP (76 aa).

This sequence belongs to the MYB-CC family.

It localises to the nucleus. The polypeptide is Myb family transcription factor PHL7 (Arabidopsis thaliana (Mouse-ear cress)).